The sequence spans 114 residues: UPF0145 protein TT_C1581 (114 aa).

The protein belongs to the UPF0145 family.

The chain is UPF0145 protein TT_C1581 from Thermus thermophilus (strain ATCC BAA-163 / DSM 7039 / HB27).